The sequence spans 878 residues: Alanine--tRNA ligase (878 aa).

Zn(2+) contacts are provided by histidine 567, histidine 571, cysteine 669, and histidine 673.

The protein belongs to the class-II aminoacyl-tRNA synthetase family. Zn(2+) serves as cofactor.

It localises to the cytoplasm. The catalysed reaction is tRNA(Ala) + L-alanine + ATP = L-alanyl-tRNA(Ala) + AMP + diphosphate. Catalyzes the attachment of alanine to tRNA(Ala) in a two-step reaction: alanine is first activated by ATP to form Ala-AMP and then transferred to the acceptor end of tRNA(Ala). Also edits incorrectly charged Ser-tRNA(Ala) and Gly-tRNA(Ala) via its editing domain. The polypeptide is Alanine--tRNA ligase (Rickettsia akari (strain Hartford)).